Consider the following 267-residue polypeptide: 5'-nucleotidase SurE (267 aa).

A divalent metal cation contacts are provided by Asp14, Asp15, Ser45, and Asn100.

It belongs to the SurE nucleotidase family. A divalent metal cation is required as a cofactor.

It localises to the cytoplasm. The enzyme catalyses a ribonucleoside 5'-phosphate + H2O = a ribonucleoside + phosphate. Its function is as follows. Nucleotidase that shows phosphatase activity on nucleoside 5'-monophosphates. The polypeptide is 5'-nucleotidase SurE (Methanosarcina barkeri (strain Fusaro / DSM 804)).